We begin with the raw amino-acid sequence, 157 residues long: Receptor activity-modifying protein 2 (157 aa).

Positions 1–24 (MAARLRPLLALLALAALCPQETLA) are cleaved as a signal peptide. The Extracellular segment spans residues 25-125 (QPLPTTDTWK…EQPTLCDPPE (101 aa)). Disulfide bonds link Cys50/Cys81 and Cys66/Cys113. Residues Asn67 and Asn112 are each glycosylated (N-linked (GlcNAc...) asparagine). Residues 126–147 (DVLLAMIIAPICLIPFFVTLVV) form a helical membrane-spanning segment. At 148-157 (WRSKGTELKT) the chain is on the cytoplasmic side.

It belongs to the RAMP family. In terms of assembly, heterodimer of CALCRL and RAMP2; the interaction forms the receptor complex for adrenomedullin/ADM. Heterodimer of CALCR and RAMP2; interaction forms the AMYR2 receptor complex for calcitonin/CALC and amylin/IAPP.

Its subcellular location is the cell membrane. Functionally, accessory protein that interacts with and modulates the function of G-protein coupled receptors including calcitonin gene-related peptide type 1 receptor (CALCRL) and calcitonin receptor (CALCR). Required for the transport of CALCRL to the plasma membrane. Together with CALCRL, form a receptor complex for adrenomedullin/ADM. Together with CALCR, act as a receptor complex for calcitonin/CT/CALC. Together with CALCR, also act as a receptor complex for amylin/IAPP. The polypeptide is Receptor activity-modifying protein 2 (RAMP2) (Cavia porcellus (Guinea pig)).